The chain runs to 143 residues: Transcriptional regulator MraZ (143 aa).

SpoVT-AbrB domains lie at 5–47 (EYEH…PRSV) and 76–119 (AADM…APRR).

This sequence belongs to the MraZ family. In terms of assembly, forms oligomers.

The protein resides in the cytoplasm. Its subcellular location is the nucleoid. This Roseiflexus sp. (strain RS-1) protein is Transcriptional regulator MraZ.